The chain runs to 542 residues: Calcium-dependent protein kinase 15 (542 aa).

The segment at 1–73 (MGARASRHRQ…QAPQQAAAED (73 aa)) is disordered. Residue Gly2 is the site of N-myristoyl glycine attachment. Residues 12-21 (PDQSQSQSPS) are compositionally biased toward low complexity. Basic residues predominate over residues 22–40 (PHHKHHHHHQTTRAPKPKP). Residues 41–60 (KPQPPPPQQPRSQPPPPPRH) show a composition bias toward pro residues. The segment covering 61 to 71 (QPQQAPQQAAA) has biased composition (low complexity). The region spanning 90–348 (YTFGRELGRG…AAEILNHPWI (259 aa)) is the Protein kinase domain. Residues 96 to 104 (LGRGQFGVT) and Lys119 each bind ATP. Asp214 acts as the Proton acceptor in catalysis. Residues 354 to 384 (APDKPLDITVISRMKQFRAMNKLKKVALKVV) are autoinhibitory domain. 4 EF-hand domains span residues 391 to 426 (EEIV…LGTK), 427 to 462 (ISES…MNRL), 463 to 497 (EKED…KYDM), and 498 to 533 (GDEA…NSPE). The Ca(2+) site is built by Asp404, Asp406, Ser408, Thr410, Glu415, Asp440, Asp442, Asn444, Ser446, Glu451, Asp476, Asp478, Ser480, Glu487, Asp511, Asp513, Asp515, Arg517, and Glu522.

This sequence belongs to the protein kinase superfamily. Ser/Thr protein kinase family. CDPK subfamily.

The protein resides in the membrane. The catalysed reaction is L-seryl-[protein] + ATP = O-phospho-L-seryl-[protein] + ADP + H(+). It carries out the reaction L-threonyl-[protein] + ATP = O-phospho-L-threonyl-[protein] + ADP + H(+). Its activity is regulated as follows. Activated by calcium. Autophosphorylation may play an important role in the regulation of the kinase activity. Functionally, may play a role in signal transduction pathways that involve calcium as a second messenger. The sequence is that of Calcium-dependent protein kinase 15 from Oryza sativa subsp. japonica (Rice).